We begin with the raw amino-acid sequence, 466 residues long: Alpha-1A adrenergic receptor (466 aa).

At 1 to 27 (MVLLSENASEGSNCTHPPAPVNISKAI) the chain is on the extracellular side. N-linked (GlcNAc...) asparagine glycans are attached at residues Asn7, Asn13, and Asn22. The chain crosses the membrane as a helical span at residues 28–51 (LLGVILGGLIIFGVLGNILVILSV). Residues 52–64 (ACHRHLHSVTHYY) are Cytoplasmic-facing. The helical transmembrane segment at 65 to 88 (IVNLAVADLLLTSTVLPFSAIFEI) threads the bilayer. Residues 89 to 99 (LGYWAFGRVFC) are Extracellular-facing. The cysteines at positions 99 and 176 are disulfide-linked. Residues 100-122 (NIWAAVDVLCCTASIMGLCIISI) form a helical membrane-spanning segment. Residues 123–143 (DRYIGVSYPLRYPTIVTQRRG) are Cytoplasmic-facing. The chain crosses the membrane as a helical span at residues 144 to 167 (VRALLCVWVLSLVISIGPLFGWRQ). Residues 168-181 (PAPEDETICQINEE) are Extracellular-facing. A helical transmembrane segment spans residues 182–205 (PGYVLFSALGSFYVPLAIILVMYC). Topologically, residues 206 to 273 (RVYVVAKRES…FSREKKAAKT (68 aa)) are cytoplasmic. A Phosphoserine; by PKA modification is found at Ser215. The chain crosses the membrane as a helical span at residues 274–297 (LGIVVGCFVLCWLPFFLVMPIGSF). The Extracellular portion of the chain corresponds to 298 to 305 (FPDFKPSE). A helical membrane pass occupies residues 306 to 329 (TVFKIVFWLGYLNSCINPIIYPCS). Residues 330–466 (SQEFKKAFQN…ISLGENGEEV (137 aa)) lie on the Cytoplasmic side of the membrane. The Nuclear localization signal motif lies at 334-349 (KKAFQNVLRIQCLRRR). Cys345 carries S-palmitoyl cysteine lipidation.

It belongs to the G-protein coupled receptor 1 family. Adrenergic receptor subfamily. ADRA1A sub-subfamily. Homo- and heterooligomer. Heterooligomerizes with ADRA1B homooligomers in cardiac myocytes. Interacts with CAVIN4. In terms of processing, C-terminal Ser or Thr residues may be phosphorylated. As to expression, abundant in heart, brain, aorta, vena cava, vas deferens, submaxillary gland, lung, and kidney. Found at lower levels in prostate, parotid gland and skeletal muscle.

It localises to the nucleus membrane. It is found in the cell membrane. The protein resides in the cytoplasm. The protein localises to the membrane. Its subcellular location is the caveola. This alpha-adrenergic receptor mediates its action by association with G proteins that activate a phosphatidylinositol-calcium second messenger system. Its effect is mediated by G(q) and G(11) proteins. Nuclear ADRA1A-ADRA1B heterooligomers regulate phenylephrine (PE)-stimulated ERK signaling in cardiac myocytes. This chain is Alpha-1A adrenergic receptor (Adra1a), found in Rattus norvegicus (Rat).